Reading from the N-terminus, the 156-residue chain is Small ribosomal subunit protein uS7 (156 aa).

Belongs to the universal ribosomal protein uS7 family. Part of the 30S ribosomal subunit. Contacts proteins S9 and S11.

In terms of biological role, one of the primary rRNA binding proteins, it binds directly to 16S rRNA where it nucleates assembly of the head domain of the 30S subunit. Is located at the subunit interface close to the decoding center, probably blocks exit of the E-site tRNA. The sequence is that of Small ribosomal subunit protein uS7 from Picosynechococcus sp. (strain ATCC 27264 / PCC 7002 / PR-6) (Agmenellum quadruplicatum).